Here is a 104-residue protein sequence, read N- to C-terminus: MKDKKRPPSVKPLARERIAVLFSEAEKIFHENPGYSDRYVALARKISMKERVRIDHEYRRRFCHHCSRYLVPGANMRVRVHHGWVAVTCLGCKKTTRYRVERTP.

Residues Cys63, Cys66, Cys89, and Cys92 each contribute to the Zn(2+) site.

The protein belongs to the eukaryotic/archaeal RNase P protein component 4 family. As to quaternary structure, consists of a catalytic RNA component and at least 4-5 protein subunits. Requires Zn(2+) as cofactor.

It localises to the cytoplasm. The enzyme catalyses Endonucleolytic cleavage of RNA, removing 5'-extranucleotides from tRNA precursor.. In terms of biological role, part of ribonuclease P, a protein complex that generates mature tRNA molecules by cleaving their 5'-ends. This Methanoregula boonei (strain DSM 21154 / JCM 14090 / 6A8) protein is Ribonuclease P protein component 4.